The chain runs to 1004 residues: Cadmium/zinc-transporting ATPase HMA3 (1004 aa).

The 67-residue stretch at 42–108 (KKTYLDVLGV…ALNKAGLEAS (67 aa)) folds into the HMA domain. A run of 8 helical transmembrane segments spans residues 120–140 (RWPS…FFEW), 144–164 (PLQC…VRRG), 171–191 (LSLD…CLGD), 193–213 (TEAG…TLAC), 340–360 (CAKY…LIPA), 371–391 (WKLA…LSTP), 683–703 (IAVN…LAAA), and 707–727 (VLWA…LNSM). Positions 931–952 (TGCGASKRSPPAEGSCSGGEGG) are disordered.

The protein belongs to the cation transport ATPase (P-type) (TC 3.A.3) family. Type IB subfamily. Specifically expressed in roots.

Its subcellular location is the vacuole membrane. It carries out the reaction Zn(2+)(in) + ATP + H2O = Zn(2+)(out) + ADP + phosphate + H(+). It catalyses the reaction Cd(2+)(in) + ATP + H2O = Cd(2+)(out) + ADP + phosphate + H(+). In terms of biological role, root-specific cadmium (Cd) transporter that mediates Cd efflux in root vacuoles. Involved in Cd detoxification by sequestrating Cd into root vacuoles and limiting translocation of Cd from the roots to the shoots, and accumulation in grains. This is Cadmium/zinc-transporting ATPase HMA3 from Oryza sativa subsp. japonica (Rice).